The chain runs to 38 residues: Large ribosomal subunit protein bL36 (38 aa).

This sequence belongs to the bacterial ribosomal protein bL36 family.

This chain is Large ribosomal subunit protein bL36, found in Cupriavidus metallidurans (strain ATCC 43123 / DSM 2839 / NBRC 102507 / CH34) (Ralstonia metallidurans).